The chain runs to 194 residues: Elongation factor P (194 aa).

The protein belongs to the elongation factor P family.

Its subcellular location is the cytoplasm. It participates in protein biosynthesis; polypeptide chain elongation. Functionally, involved in peptide bond synthesis. Stimulates efficient translation and peptide-bond synthesis on native or reconstituted 70S ribosomes in vitro. Probably functions indirectly by altering the affinity of the ribosome for aminoacyl-tRNA, thus increasing their reactivity as acceptors for peptidyl transferase. In Hydrogenobaculum sp. (strain Y04AAS1), this protein is Elongation factor P.